The primary structure comprises 164 residues: NADH-quinone oxidoreductase subunit I (164 aa).

2 4Fe-4S ferredoxin-type domains span residues Leu55 to Glu85 and Thr95 to Asn124. [4Fe-4S] cluster is bound by residues Cys65, Cys68, Cys71, Cys75, Cys104, Cys107, Cys110, and Cys114.

Belongs to the complex I 23 kDa subunit family. In terms of assembly, NDH-1 is composed of 14 different subunits. Subunits NuoA, H, J, K, L, M, N constitute the membrane sector of the complex. [4Fe-4S] cluster is required as a cofactor.

It is found in the cell inner membrane. It catalyses the reaction a quinone + NADH + 5 H(+)(in) = a quinol + NAD(+) + 4 H(+)(out). Functionally, NDH-1 shuttles electrons from NADH, via FMN and iron-sulfur (Fe-S) centers, to quinones in the respiratory chain. The immediate electron acceptor for the enzyme in this species is believed to be ubiquinone. Couples the redox reaction to proton translocation (for every two electrons transferred, four hydrogen ions are translocated across the cytoplasmic membrane), and thus conserves the redox energy in a proton gradient. This is NADH-quinone oxidoreductase subunit I from Jannaschia sp. (strain CCS1).